Here is a 416-residue protein sequence, read N- to C-terminus: Multifunctional CCA protein (416 aa).

Residues Gly8 and Arg11 each coordinate ATP. 2 residues coordinate CTP: Gly8 and Arg11. Mg(2+) is bound by residues Asp21 and Asp23. Residues Arg91, Arg138, and Arg141 each contribute to the ATP site. CTP contacts are provided by Arg91, Arg138, and Arg141. The HD domain maps to 229 to 331 (TGLHQELVSD…YELLQRCDAF (103 aa)).

Belongs to the tRNA nucleotidyltransferase/poly(A) polymerase family. Bacterial CCA-adding enzyme type 1 subfamily. As to quaternary structure, monomer. Can also form homodimers and oligomers. Requires Mg(2+) as cofactor. The cofactor is Ni(2+).

It carries out the reaction a tRNA precursor + 2 CTP + ATP = a tRNA with a 3' CCA end + 3 diphosphate. The catalysed reaction is a tRNA with a 3' CCA end + 2 CTP + ATP = a tRNA with a 3' CCACCA end + 3 diphosphate. Functionally, catalyzes the addition and repair of the essential 3'-terminal CCA sequence in tRNAs without using a nucleic acid template. Adds these three nucleotides in the order of C, C, and A to the tRNA nucleotide-73, using CTP and ATP as substrates and producing inorganic pyrophosphate. tRNA 3'-terminal CCA addition is required both for tRNA processing and repair. Also involved in tRNA surveillance by mediating tandem CCA addition to generate a CCACCA at the 3' terminus of unstable tRNAs. While stable tRNAs receive only 3'-terminal CCA, unstable tRNAs are marked with CCACCA and rapidly degraded. The protein is Multifunctional CCA protein of Xylella fastidiosa (strain 9a5c).